Consider the following 542-residue polypeptide: MATNYIFVTGGVVSSLGKGIAAASLAAILEARGLKVTMLKLDPYINVDPGTMSPTQHGEVFVTQDGAETDLDLGHYERFIRTKMTKRNNFTTGKIYSEVLRKERRGDYLGATIQVIPHITNEIKSRVIDGAAGHDVAIVEVGGTVGDIESLPFLEALRQLAVQVGRERTLFMHLTLVPYIPTAGEVKTKPTQHSVKELLSIGIQPDVLICRSDRMVPPNERAKIALFCNVPERAVISLKDVSSIYQIPALLKSQGLDDFICQRFHLDCPEADLSEWEQVLYQEANPTGEVVIGMVGKYTELPDAYKSVNEALKHAGLKNRLSVQIKYIDSQDVETKGTEVLEGVDGILVPGGFGNRGVEGKILTAKYARENHIPYLGICLGMQVAYIEYARNVAGLTDANSTEFDRTCDYPVVGLITEWQDAEGNIETRTDASDLGGTMRLGAQQCHLMEGSKARELYGAETIEERHRHRYEVNNVLRPQVEKAGLKVTGLSADKKLVEIIEVPNHPWFVACQFHPEFTSTPRDGHPLFAGFVKAAKDNQKK.

The amidoligase domain stretch occupies residues 1–266; the sequence is MATNYIFVTG…DDFICQRFHL (266 aa). A CTP-binding site is contributed by S14. S14 provides a ligand contact to UTP. ATP is bound by residues 15–20 and D72; that span reads SLGKGI. Mg(2+) contacts are provided by D72 and E140. Residues 147-149, 187-192, and K223 each bind CTP; these read DIE and KTKPTQ. UTP is bound by residues 187–192 and K223; that span reads KTKPTQ. 239 to 241 lines the ATP pocket; the sequence is KDV. Residues 291 to 542 form the Glutamine amidotransferase type-1 domain; it reads VIGMVGKYTE…VKAAKDNQKK (252 aa). G352 serves as a coordination point for L-glutamine. C379 serves as the catalytic Nucleophile; for glutamine hydrolysis. L-glutamine is bound by residues 380-383, E403, and R470; that span reads LGMQ. Catalysis depends on residues H515 and E517.

It belongs to the CTP synthase family. Homotetramer.

The enzyme catalyses UTP + L-glutamine + ATP + H2O = CTP + L-glutamate + ADP + phosphate + 2 H(+). The catalysed reaction is L-glutamine + H2O = L-glutamate + NH4(+). It carries out the reaction UTP + NH4(+) + ATP = CTP + ADP + phosphate + 2 H(+). It participates in pyrimidine metabolism; CTP biosynthesis via de novo pathway; CTP from UDP: step 2/2. With respect to regulation, allosterically activated by GTP, when glutamine is the substrate; GTP has no effect on the reaction when ammonia is the substrate. The allosteric effector GTP functions by stabilizing the protein conformation that binds the tetrahedral intermediate(s) formed during glutamine hydrolysis. Inhibited by the product CTP, via allosteric rather than competitive inhibition. Its function is as follows. Catalyzes the ATP-dependent amination of UTP to CTP with either L-glutamine or ammonia as the source of nitrogen. Regulates intracellular CTP levels through interactions with the four ribonucleotide triphosphates. This is CTP synthase from Pasteurella multocida (strain Pm70).